Reading from the N-terminus, the 252-residue chain is Chitooligosaccharide deacetylase (252 aa).

Residues His-61 and His-125 each coordinate Mg(2+).

The protein belongs to the YdjC deacetylase family. ChbG subfamily. In terms of assembly, homodimer. Requires Mg(2+) as cofactor.

The protein resides in the cytoplasm. The catalysed reaction is N,N'-diacetylchitobiose + H2O = N-acetyl-beta-D-glucosaminyl-(1-&gt;4)-D-glucosamine + acetate. It catalyses the reaction diacetylchitobiose-6'-phosphate + H2O = N'-monoacetylchitobiose-6'-phosphate + acetate. It participates in glycan degradation; chitin degradation. Involved in the degradation of chitin. ChbG is essential for growth on the acetylated chitooligosaccharides chitobiose and chitotriose but is dispensable for growth on cellobiose and chitosan dimer, the deacetylated form of chitobiose. Deacetylation of chitobiose-6-P and chitotriose-6-P is necessary for both the activation of the chb promoter by the regulatory protein ChbR and the hydrolysis of phosphorylated beta-glucosides by the phospho-beta-glucosidase ChbF. Catalyzes the removal of only one acetyl group from chitobiose-6-P to yield monoacetylchitobiose-6-P, the inducer of ChbR and the substrate of ChbF. In Escherichia coli O45:K1 (strain S88 / ExPEC), this protein is Chitooligosaccharide deacetylase.